The sequence spans 312 residues: Undecaprenyl-diphosphatase (312 aa).

Helical transmembrane passes span 74–94 (GVAF…WYFW), 122–142 (VSIG…KVFI), 154–174 (VAIA…ERIG), 183–203 (LDIR…IPGV), 226–246 (FSFL…LKTL), 254–274 (VGLV…YIAI), and 288–308 (IFIW…ISGV).

Belongs to the UppP family.

The protein localises to the cell inner membrane. It carries out the reaction di-trans,octa-cis-undecaprenyl diphosphate + H2O = di-trans,octa-cis-undecaprenyl phosphate + phosphate + H(+). In terms of biological role, catalyzes the dephosphorylation of undecaprenyl diphosphate (UPP). Confers resistance to bacitracin. This chain is Undecaprenyl-diphosphatase, found in Trichodesmium erythraeum (strain IMS101).